Here is a 538-residue protein sequence, read N- to C-terminus: Syncytin-2 (538 aa).

The first 15 residues, 1–15, serve as a signal peptide directing secretion; sequence MGLLLLVLILTPSLA. Topologically, residues 16 to 478 are extracellular; the sequence is AYRHPDFPLL…GWLNWEGTWK (463 aa). The CXXC signature appears at 43 to 46; the sequence is CWLC. 3 disulfide bridges follow: Cys-43/Cys-46, Cys-43/Cys-439, and Cys-431/Cys-438. N-linked (GlcNAc...) asparagine glycosylation is found at Asn-133, Asn-146, Asn-177, Asn-220, Asn-241, Asn-247, Asn-312, and Asn-332. The segment at 354–374 is fusion peptide; that stretch reads FIPLLAGLGILAGTGTGIAGI. A CKS-17 motif is present at residues 414–430; sequence LQNRRGLDMLTAAQGGI. The short motif at 431–439 is the CX6CC element; the sequence is CLALDEKCC. Residue Asn-443 is glycosylated (N-linked (GlcNAc...) asparagine). The helical transmembrane segment at 479-499 threads the bilayer; it reads WFSWVLPLTGPLVSLLLLLLF. The Cytoplasmic segment spans residues 500-538; that stretch reads GPCLLNLITQFVSSRLQAIKLQTNLSAGRRPRNIQESPF.

It belongs to the gamma type-C retroviral envelope protein family. HERV class-I FRD env subfamily. In terms of assembly, the surface and transmembrane proteins form a heterodimer. They are attached by non-covalent interactions or by a labile interchain disulfide bond. Post-translationally, specific enzymatic cleavages in vivo yield the mature SU and TM proteins. The CXXC motif is highly conserved across a broad range of retroviral envelope proteins. It is thought to participate in the formation of a labile disulfide bond possibly with the CX6CC motif present in the transmembrane protein.

Its subcellular location is the virion. It localises to the cell membrane. This endogenous retroviral envelope protein has retained its original fusogenic properties and participates in trophoblast fusion and the formation of a syncytium during placenta morphogenesis. The interaction with MFSD2A is apparently important for this process. In terms of biological role, endogenous envelope proteins may have kept, lost or modified their original function during evolution but this one can still make pseudotypes with MLV, HIV-1 or SIV-1 virions and confer infectivity. Retroviral envelope proteins mediate receptor recognition and membrane fusion during early infection. The surface protein mediates receptor recognition, while the transmembrane protein anchors the envelope heterodimer to the viral membrane through one transmembrane domain. The other hydrophobic domain, called fusion peptide, mediates fusion of the viral membrane with the target cell membrane. This Gorilla gorilla gorilla (Western lowland gorilla) protein is Syncytin-2 (ERVFRD-1).